A 601-amino-acid polypeptide reads, in one-letter code: Probable sphingosine-1-phosphate lyase (601 aa).

K360 is subject to N6-(pyridoxal phosphate)lysine.

The protein belongs to the group II decarboxylase family. Sphingosine-1-phosphate lyase subfamily. Requires pyridoxal 5'-phosphate as cofactor.

It carries out the reaction sphinganine 1-phosphate = hexadecanal + phosphoethanolamine. In terms of biological role, cleaves phosphorylated sphingoid bases (PSBs), such as sphingosine-1-phosphate, into fatty aldehydes and phosphoethanolamine. Possibly implicated in influencing the macrophage autophagy pathway. This is Probable sphingosine-1-phosphate lyase from Legionella pneumophila subsp. pneumophila (strain Philadelphia 1 / ATCC 33152 / DSM 7513).